The primary structure comprises 314 residues: Pectin lyase (314 aa).

Arg202 is a catalytic residue.

The protein belongs to the polysaccharide lyase 1 family.

The enzyme catalyses Eliminative cleavage of (1-&gt;4)-alpha-D-galacturonan methyl ester to give oligosaccharides with 4-deoxy-6-O-methyl-alpha-D-galact-4-enuronosyl groups at their non-reducing ends.. The polypeptide is Pectin lyase (pnl) (Pectobacterium carotovorum (Erwinia carotovora)).